The primary structure comprises 364 residues: Tubulin alpha-2 chain (364 aa).

The GTP site is built by Gly-59, Thr-60, Thr-94, Asn-121, and Asn-144. Glu-170 is an active-site residue.

The protein belongs to the tubulin family. As to quaternary structure, dimer of alpha and beta chains. A typical microtubule is a hollow water-filled tube with an outer diameter of 25 nm and an inner diameter of 15 nM. Alpha-beta heterodimers associate head-to-tail to form protofilaments running lengthwise along the microtubule wall with the beta-tubulin subunit facing the microtubule plus end conferring a structural polarity. Microtubules usually have 13 protofilaments but different protofilament numbers can be found in some organisms and specialized cells. Mg(2+) serves as cofactor. Post-translationally, undergoes a tyrosination/detyrosination cycle, the cyclic removal and re-addition of a C-terminal tyrosine residue by the enzymes tubulin tyrosine carboxypeptidase (TTCP) and tubulin tyrosine ligase (TTL), respectively.

It localises to the cytoplasm. The protein resides in the cytoskeleton. The enzyme catalyses GTP + H2O = GDP + phosphate + H(+). Functionally, tubulin is the major constituent of microtubules, a cylinder consisting of laterally associated linear protofilaments composed of alpha- and beta-tubulin heterodimers. Microtubules grow by the addition of GTP-tubulin dimers to the microtubule end, where a stabilizing cap forms. Below the cap, tubulin dimers are in GDP-bound state, owing to GTPase activity of alpha-tubulin. This Anemia phyllitidis (Fern) protein is Tubulin alpha-2 chain (TUBA2).